We begin with the raw amino-acid sequence, 352 residues long: MKLSCTLTQWALYVCPAVLLATQMLLAASSETLKCEGLVSTEQGSCQAAAEEDEGDEDDGDMTQSSEAGFQFKGYTFSKPFHLSVSYDWLILQGPATLIFEGDTLVLHCRAWQDWPLTQVIFYREGSALGPPGPKSEFSITMVQKSDGGHYHCSGIFRSPGPGSREAASPVAITVQELFAAPVLKALPSSEPQEGGSVTLSCQTKLALQRSASRLLFSFYKDGRSLSVRGVSSELKIPKASEEHSGSYWCEAVTEDRQISKQSPQLEIWVQALQKPTASETPPTEALGPLPPPPASSAEQPRFSSPDPHLHHQMQLLLKQIQDVRALLGHLVMELRDLSVYLKPGTTKVADK.

The N-terminal stretch at 1–30 (MKLSCTLTQWALYVCPAVLLATQMLLAASS) is a signal peptide. The tract at residues 46–65 (CQAAAEEDEGDEDDGDMTQS) is disordered. Residues 50–61 (AEEDEGDEDDGD) are compositionally biased toward acidic residues. 2 consecutive Ig-like C2-type domains span residues 80 to 169 (PFHL…EAAS) and 182 to 260 (PVLK…RQIS). Cystine bridges form between C109/C153 and C202/C250. Residues 275–310 (KPTASETPPTEALGPLPPPPASSAEQPRFSSPDPHL) form a disordered region.

In terms of assembly, monomer or homodimer; disulfide-linked. As to expression, highly expressed in spleen. Expressed in immature B-cell and B-cell lines.

The protein localises to the cytoplasm. In terms of biological role, may be implicated in B-cell differentiation and lymphomagenesis. This chain is Fc receptor-like A (Fcrla), found in Mus musculus (Mouse).